Reading from the N-terminus, the 5005-residue chain is Bridge-like lipid transfer protein family member 1 (5005 aa).

The helical transmembrane segment at asparagine 26–tyrosine 46 threads the bilayer. Disordered regions lie at residues leucine 691–aspartate 721, leucine 1218–alanine 1257, and glycine 1269–glutamine 1310. Low complexity-rich tracts occupy residues arginine 700–proline 711 and serine 1226–serine 1240. Residues glycine 1248–alanine 1257 show a composition bias toward basic and acidic residues. The span at serine 1278–leucine 1303 shows a compositional bias: polar residues. 3 positions are modified to phosphoserine: serine 1301, serine 1305, and serine 1323. Threonine 1325 is modified (phosphothreonine). 4 disordered regions span residues serine 1343–phenylalanine 1376, glutamate 1400–aspartate 1427, threonine 1521–phenylalanine 1548, and phenylalanine 1676–alanine 1704. Serine 1355 and serine 1406 each carry phosphoserine. The span at threonine 1521–leucine 1530 shows a compositional bias: basic residues. A compositionally biased stretch (polar residues) spans threonine 1691–alanine 1704. Phosphoserine occurs at positions 1805 and 1808. 3 disordered regions span residues aspartate 1924–proline 1991, serine 2401–valine 2420, and threonine 2598–valine 2677. Polar residues-rich tracts occupy residues leucine 1931–aspartate 1948, threonine 1959–serine 1971, serine 2401–aspartate 2418, and threonine 2598–phenylalanine 2608. Phosphoserine occurs at positions 2601 and 2603. Residues serine 2619–alanine 2638 show a composition bias toward low complexity. Residues threonine 2643–threonine 2665 are compositionally biased toward basic and acidic residues. A Phosphoserine modification is found at serine 2755. Residues arginine 2928–leucine 2967 are disordered. A compositionally biased stretch (polar residues) spans lysine 2949–phenylalanine 2964. A Phosphoserine modification is found at serine 3562. The span at proline 3612–alanine 3622 shows a compositional bias: polar residues. Disordered stretches follow at residues proline 3612–asparagine 3661, serine 3686–tyrosine 3744, arginine 3821–glutamine 3843, tyrosine 3914–glycine 3954, glycine 4088–serine 4146, and glutamine 4325–serine 4394. Serine 3653 bears the Phosphoserine mark. A compositionally biased stretch (polar residues) spans serine 3686–lysine 3700. The span at glutamate 3727–glutamate 3736 shows a compositional bias: acidic residues. A compositionally biased stretch (basic and acidic residues) spans arginine 3821–serine 3837. Composition is skewed to polar residues over residues threonine 3931–leucine 3940 and proline 4098–lysine 4113. Positions leucine 4122–serine 4146 are enriched in low complexity. The residue at position 4124 (serine 4124) is a Phosphoserine. Residues glutamine 4325 to lysine 4358 are compositionally biased toward polar residues. Positions serine 4359–serine 4372 are enriched in low complexity. A compositionally biased stretch (polar residues) spans lysine 4381 to serine 4394.

Highly expressed in testis and ovary. Weakly or not expressed in other tissues.

Its subcellular location is the cell membrane. The protein resides in the endoplasmic reticulum membrane. The protein localises to the mitochondrion membrane. Tube-forming lipid transport protein which provides phosphatidylethanolamine for glycosylphosphatidylinositol (GPI) anchor synthesis in the endoplasmic reticulum. Plays a role in endosomal trafficking and endosome recycling. Also involved in the actin cytoskeleton and cilia structural dynamics. Acts as a regulator of phagocytosis. The sequence is that of Bridge-like lipid transfer protein family member 1 from Homo sapiens (Human).